A 289-amino-acid chain; its full sequence is ATP synthase gamma chain (289 aa).

This sequence belongs to the ATPase gamma chain family. In terms of assembly, F-type ATPases have 2 components, CF(1) - the catalytic core - and CF(0) - the membrane proton channel. CF(1) has five subunits: alpha(3), beta(3), gamma(1), delta(1), epsilon(1). CF(0) has three main subunits: a, b and c.

It localises to the cell inner membrane. Functionally, produces ATP from ADP in the presence of a proton gradient across the membrane. The gamma chain is believed to be important in regulating ATPase activity and the flow of protons through the CF(0) complex. The protein is ATP synthase gamma chain of Haemophilus influenzae (strain 86-028NP).